We begin with the raw amino-acid sequence, 99 residues long: Malonate decarboxylase acyl carrier protein (99 aa).

Residue S25 is modified to O-(phosphoribosyl dephospho-coenzyme A)serine.

This sequence belongs to the MdcC family. In terms of processing, covalently binds the prosthetic group of malonate decarboxylase.

It localises to the cytoplasm. Subunit of malonate decarboxylase, it is an acyl carrier protein to which acetyl and malonyl thioester residues are bound via a 2'-(5''-phosphoribosyl)-3'-dephospho-CoA prosthetic group and turn over during the catalytic mechanism. The polypeptide is Malonate decarboxylase acyl carrier protein (Pseudomonas syringae pv. tomato (strain ATCC BAA-871 / DC3000)).